The sequence spans 810 residues: Lon protease (810 aa).

Residues 40–233 (LIIVPVRGFV…MVAKLLAQRI (194 aa)) enclose the Lon N-terminal domain. 385-392 (GPPGVGKT) provides a ligand contact to ATP. The region spanning 621–802 (LSVPGVATGL…DDAMAAAFEG (182 aa)) is the Lon proteolytic domain. Residues Ser708 and Lys751 contribute to the active site.

The protein belongs to the peptidase S16 family. In terms of assembly, homohexamer. Organized in a ring with a central cavity.

The protein localises to the cytoplasm. The enzyme catalyses Hydrolysis of proteins in presence of ATP.. In terms of biological role, ATP-dependent serine protease that mediates the selective degradation of mutant and abnormal proteins as well as certain short-lived regulatory proteins. Required for cellular homeostasis and for survival from DNA damage and developmental changes induced by stress. Degrades polypeptides processively to yield small peptide fragments that are 5 to 10 amino acids long. Binds to DNA in a double-stranded, site-specific manner. This chain is Lon protease, found in Methylocella silvestris (strain DSM 15510 / CIP 108128 / LMG 27833 / NCIMB 13906 / BL2).